The chain runs to 474 residues: tRNA-2-methylthio-N(6)-dimethylallyladenosine synthase (474 aa).

The 118-residue stretch at 3–120 (KKLHIKTWGC…LPEMIEQIQQ (118 aa)) folds into the MTTase N-terminal domain. Residues C12, C49, C83, C157, C161, and C164 each coordinate [4Fe-4S] cluster. Positions 143-375 (RAEGPSAFVS…QDRITQQAMR (233 aa)) constitute a Radical SAM core domain. Positions 378–441 (RQMLGTVQRI…TNSLRGKFIR (64 aa)) constitute a TRAM domain.

Belongs to the methylthiotransferase family. MiaB subfamily. As to quaternary structure, monomer. It depends on [4Fe-4S] cluster as a cofactor.

Its subcellular location is the cytoplasm. The catalysed reaction is N(6)-dimethylallyladenosine(37) in tRNA + (sulfur carrier)-SH + AH2 + 2 S-adenosyl-L-methionine = 2-methylsulfanyl-N(6)-dimethylallyladenosine(37) in tRNA + (sulfur carrier)-H + 5'-deoxyadenosine + L-methionine + A + S-adenosyl-L-homocysteine + 2 H(+). Catalyzes the methylthiolation of N6-(dimethylallyl)adenosine (i(6)A), leading to the formation of 2-methylthio-N6-(dimethylallyl)adenosine (ms(2)i(6)A) at position 37 in tRNAs that read codons beginning with uridine. This chain is tRNA-2-methylthio-N(6)-dimethylallyladenosine synthase, found in Shewanella loihica (strain ATCC BAA-1088 / PV-4).